The chain runs to 392 residues: Phospho-N-acetylmuramoyl-pentapeptide-transferase (392 aa).

Transmembrane regions (helical) follow at residues 24–44 (YLTFRAVMAAMTALLIGLLAG), 76–96 (TMGGVLILGAIAISTLLWFDL), 100–120 (FVWVVLAVTLGFGAIGWVDDW), 137–157 (YFWQSVIGIVAALYLVFCISE), 193–213 (VSYPLGVLGFVILTYLVIVGS), 225–245 (GLAIMPVVMVGASLGVFAYVT), 262–282 (AGELLIFCSAMAGAGLAFLWF), 289–309 (VFMGDVGALALGGALGTIAII), 314–334 (IVLAIMGGIFVVEALSVMLQV), and 369–389 (QVVVRFWIITMLLCLIGLTTL).

It belongs to the glycosyltransferase 4 family. MraY subfamily. It depends on Mg(2+) as a cofactor.

Its subcellular location is the cell inner membrane. It carries out the reaction UDP-N-acetyl-alpha-D-muramoyl-L-alanyl-gamma-D-glutamyl-meso-2,6-diaminopimeloyl-D-alanyl-D-alanine + di-trans,octa-cis-undecaprenyl phosphate = di-trans,octa-cis-undecaprenyl diphospho-N-acetyl-alpha-D-muramoyl-L-alanyl-D-glutamyl-meso-2,6-diaminopimeloyl-D-alanyl-D-alanine + UMP. The protein operates within cell wall biogenesis; peptidoglycan biosynthesis. Its function is as follows. Catalyzes the initial step of the lipid cycle reactions in the biosynthesis of the cell wall peptidoglycan: transfers peptidoglycan precursor phospho-MurNAc-pentapeptide from UDP-MurNAc-pentapeptide onto the lipid carrier undecaprenyl phosphate, yielding undecaprenyl-pyrophosphoryl-MurNAc-pentapeptide, known as lipid I. This is Phospho-N-acetylmuramoyl-pentapeptide-transferase from Paracidovorax citrulli (strain AAC00-1) (Acidovorax citrulli).